A 235-amino-acid polypeptide reads, in one-letter code: MRLIPAVDLKSGKAVRLYEGDPARETPYGDPVEAALRFQEEGATLLHLVDLDRALGTGENREVVRRVAASLSIPFQLAGGIRSLEALQEALSLGASRAVVGTVAVKDPGLLARMLEAVGPDRLAVALDARGLEVVVSGWQEAVSASALDLLRAWAEMGVRTLLYTDVRRDGTLLGLDREVVARVRAAWPYELIVGGGIASPEDLHLLQALGVDGALVGKALYEGRIRLKEASWRS.

The Proton acceptor role is filled by Asp-8. Asp-128 serves as the catalytic Proton donor.

The protein belongs to the HisA/HisF family.

Its subcellular location is the cytoplasm. The catalysed reaction is 1-(5-phospho-beta-D-ribosyl)-5-[(5-phospho-beta-D-ribosylamino)methylideneamino]imidazole-4-carboxamide = 5-[(5-phospho-1-deoxy-D-ribulos-1-ylimino)methylamino]-1-(5-phospho-beta-D-ribosyl)imidazole-4-carboxamide. Its pathway is amino-acid biosynthesis; L-histidine biosynthesis; L-histidine from 5-phospho-alpha-D-ribose 1-diphosphate: step 4/9. In Thermus thermophilus (strain ATCC 27634 / DSM 579 / HB8), this protein is 1-(5-phosphoribosyl)-5-[(5-phosphoribosylamino)methylideneamino] imidazole-4-carboxamide isomerase.